Consider the following 311-residue polypeptide: 4-diphosphocytidyl-2-C-methyl-D-erythritol kinase (311 aa).

Lys-16 is a catalytic residue. Position 101 to 111 (101 to 111) interacts with ATP; sequence PVAGGMAGGSA. The active site involves Asp-143.

The protein belongs to the GHMP kinase family. IspE subfamily.

It carries out the reaction 4-CDP-2-C-methyl-D-erythritol + ATP = 4-CDP-2-C-methyl-D-erythritol 2-phosphate + ADP + H(+). It participates in isoprenoid biosynthesis; isopentenyl diphosphate biosynthesis via DXP pathway; isopentenyl diphosphate from 1-deoxy-D-xylulose 5-phosphate: step 3/6. Functionally, catalyzes the phosphorylation of the position 2 hydroxy group of 4-diphosphocytidyl-2C-methyl-D-erythritol. The polypeptide is 4-diphosphocytidyl-2-C-methyl-D-erythritol kinase (Rhodococcus jostii (strain RHA1)).